A 346-amino-acid polypeptide reads, in one-letter code: Annexin A1 (346 aa).

A2 is subject to N-acetylalanine. Phosphoserine; by TRPM7 is present on S5. Q19 is covalently cross-linked (Isoglutamyl lysine isopeptide (Gln-Lys) (interchain with K-?)). Y21 carries the post-translational modification Phosphotyrosine; by EGFR. S27 is subject to Phosphoserine; by PKC. Phosphoserine is present on residues S34 and S37. Residue T41 is modified to Phosphothreonine. 4 Annexin repeats span residues 42 to 113, 114 to 185, 197 to 269, and 273 to 344; these read FNPS…ALLK, TPAQ…SLAK, DLAD…AIVK, and SKPA…ALCG. The residue at position 58 (K58) is an N6-acetyllysine. Residues G59, V60, E62, K97, L100, E105, M127, G129, G131, T132, and E134 each coordinate Ca(2+). Position 136 is a phosphothreonine (T136). Residues D171, G210, and R213 each contribute to the Ca(2+) site. A Glycyl lysine isopeptide (Lys-Gly) (interchain with G-Cter in SUMO1); alternate cross-link involves residue K214. K214 participates in a covalent cross-link: Glycyl lysine isopeptide (Lys-Gly) (interchain with G-Cter in SUMO2); alternate. Residue G215 participates in Ca(2+) binding. K239 bears the N6-acetyllysine mark. Ca(2+)-binding residues include D253, E255, and L256. A Glycyl lysine isopeptide (Lys-Gly) (interchain with G-Cter in SUMO1) cross-link involves residue K257. E261, M286, G288, and G290 together coordinate Ca(2+). At K312 the chain carries N6-acetyllysine. Residues C324 and C343 are joined by a disulfide bond. L328, E330, and T331 together coordinate Ca(2+). K332 participates in a covalent cross-link: Glycyl lysine isopeptide (Lys-Gly) (interchain with G-Cter in SUMO1). E336 lines the Ca(2+) pocket.

This sequence belongs to the annexin family. In terms of assembly, homodimer; non-covalently linked. Homodimer; linked by transglutamylation. Homodimers linked by transglutamylation are observed in placenta, but not in other tissues. Interacts with S100A11. Heterotetramer, formed by two molecules each of S100A11 and ANXA1. Interacts with DYSF. Interacts with EGFR. Phosphorylated by protein kinase C, EGFR and TRPM7. Phosphorylated in response to EGF treatment. In terms of processing, sumoylated. Post-translationally, proteolytically cleaved by cathepsin CTSG to release the active N-terminal peptide Ac2-26.

Its subcellular location is the nucleus. It localises to the cytoplasm. The protein localises to the cell projection. It is found in the cilium. The protein resides in the basolateral cell membrane. Its subcellular location is the lateral cell membrane. It localises to the cell membrane. The protein localises to the apical cell membrane. It is found in the membrane. The protein resides in the early endosome. Its subcellular location is the cytoplasmic vesicle membrane. It localises to the endosome membrane. The protein localises to the secreted. It is found in the extracellular space. The protein resides in the extracellular exosome. Its subcellular location is the cytoplasmic vesicle. It localises to the secretory vesicle lumen. The protein localises to the phagocytic cup. Plays important roles in the innate immune response as effector of glucocorticoid-mediated responses and regulator of the inflammatory process. Has anti-inflammatory activity. Plays a role in glucocorticoid-mediated down-regulation of the early phase of the inflammatory response. Contributes to the adaptive immune response by enhancing signaling cascades that are triggered by T-cell activation, regulates differentiation and proliferation of activated T-cells. Promotes the differentiation of T-cells into Th1 cells and negatively regulates differentiation into Th2 cells. Has no effect on unstimulated T-cells. Negatively regulates hormone exocytosis via activation of the formyl peptide receptors and reorganization of the actin cytoskeleton. Has high affinity for Ca(2+) and can bind up to eight Ca(2+) ions. Displays Ca(2+)-dependent binding to phospholipid membranes. Plays a role in the formation of phagocytic cups and phagosomes. Plays a role in phagocytosis by mediating the Ca(2+)-dependent interaction between phagosomes and the actin cytoskeleton. In terms of biological role, functions at least in part by activating the formyl peptide receptors and downstream signaling cascades. Promotes chemotaxis of granulocytes and monocytes via activation of the formyl peptide receptors. Promotes rearrangement of the actin cytoskeleton, cell polarization and cell migration. Promotes resolution of inflammation and wound healing. Acts via neutrophil N-formyl peptide receptors to enhance the release of CXCL2. This chain is Annexin A1 (ANXA1), found in Pan troglodytes (Chimpanzee).